Reading from the N-terminus, the 748-residue chain is Formate acetyltransferase (748 aa).

One can recognise a PFL domain in the interval 5-618 (NNHTNAWQGF…KTGNTPDGRK (614 aa)). The active-site S-acetylcysteine intermediate is C412. C413 acts as the Cysteine radical intermediate in catalysis. A Glycine radical domain is found at 625–748 (PGANPMHGRD…VISRTFHESM (124 aa)). Glycine radical is present on G723.

Belongs to the glycyl radical enzyme (GRE) family. PFL subfamily. In terms of assembly, homodimer.

The protein resides in the cytoplasm. It carries out the reaction formate + acetyl-CoA = pyruvate + CoA. It participates in fermentation; pyruvate fermentation; formate from pyruvate: step 1/1. Functionally, catalyzes the conversion of pyruvate to formate and acetyl-CoA. The sequence is that of Formate acetyltransferase (pflB) from Staphylococcus epidermidis (strain ATCC 12228 / FDA PCI 1200).